The chain runs to 311 residues: Maspardin (311 aa).

The AB hydrolase-1 domain occupies 86–159; sequence EFCDGFRKLL…NSFWLMPSFM (74 aa).

It belongs to the AB hydrolase superfamily.

Its subcellular location is the cytoplasm. This chain is Maspardin (spg21), found in Danio rerio (Zebrafish).